Consider the following 145-residue polypeptide: D-aminoacyl-tRNA deacylase (145 aa).

Positions 137–138 match the Gly-cisPro motif, important for rejection of L-amino acids motif; that stretch reads GP.

The protein belongs to the DTD family. As to quaternary structure, homodimer.

The protein localises to the cytoplasm. The catalysed reaction is glycyl-tRNA(Ala) + H2O = tRNA(Ala) + glycine + H(+). It catalyses the reaction a D-aminoacyl-tRNA + H2O = a tRNA + a D-alpha-amino acid + H(+). An aminoacyl-tRNA editing enzyme that deacylates mischarged D-aminoacyl-tRNAs. Also deacylates mischarged glycyl-tRNA(Ala), protecting cells against glycine mischarging by AlaRS. Acts via tRNA-based rather than protein-based catalysis; rejects L-amino acids rather than detecting D-amino acids in the active site. By recycling D-aminoacyl-tRNA to D-amino acids and free tRNA molecules, this enzyme counteracts the toxicity associated with the formation of D-aminoacyl-tRNA entities in vivo and helps enforce protein L-homochirality. In Stutzerimonas stutzeri (strain A1501) (Pseudomonas stutzeri), this protein is D-aminoacyl-tRNA deacylase.